An 880-amino-acid chain; its full sequence is Beta-N-acetylglucosaminidase (880 aa).

An N-terminal signal peptide occupies residues 1–27; sequence MKKRLIAPMLLSAASLAFFAMSGSAQA. 3 consecutive SPOR domains span residues 70 to 149, 150 to 229, and 230 to 311; these read SGTT…VKAY, GAAQ…LKET, and VKGQ…YQQV. 2 repeat units span residues 439–473 and 479–513. Residues 630–700 enclose the SH3b domain; sequence TATSTVTADV…VDPNNFSRDS (71 aa).

It belongs to the glycosyl hydrolase 73 family. In terms of assembly, homodimer.

Its subcellular location is the secreted. It is found in the cell wall. It carries out the reaction an N(4)-(oligosaccharide-(1-&gt;3)-[oligosaccharide-(1-&gt;6)]-beta-D-Man-(1-&gt;4)-beta-D-GlcNAc-(1-&gt;4)-alpha-D-GlcNAc)-L-asparaginyl-[protein] + H2O = an oligosaccharide-(1-&gt;3)-[oligosaccharide-(1-&gt;6)]-beta-D-Man-(1-&gt;4)-D-GlcNAc + N(4)-(N-acetyl-beta-D-glucosaminyl)-L-asparaginyl-[protein]. Its activity is regulated as follows. Inhibited by diethyl pyrocarbonate, slightly by EDTA. Not inhibited by PMSF, diisopropyl fluorophosphate, 2-mercaptoethanol or N-ethylmaleimide. Cell wall hydrolase not involved in cell autolysis, competence, sporulation or germination. It hydrolyzes the beta-1,4 glycan bond between the N-acetylglucosaminyl and the N-acetylmuramoyl residues in the glycan chain. The protein is Beta-N-acetylglucosaminidase (lytD) of Bacillus subtilis (strain 168).